The primary structure comprises 224 residues: UPF0173 metal-dependent hydrolase TON_1314 (224 aa).

Belongs to the UPF0173 family.

This chain is UPF0173 metal-dependent hydrolase TON_1314, found in Thermococcus onnurineus (strain NA1).